A 211-amino-acid chain; its full sequence is Large ribosomal subunit protein uL3 (211 aa).

Q151 carries the N5-methylglutamine modification.

Belongs to the universal ribosomal protein uL3 family. Part of the 50S ribosomal subunit. Forms a cluster with proteins L14 and L19. Methylated by PrmB.

In terms of biological role, one of the primary rRNA binding proteins, it binds directly near the 3'-end of the 23S rRNA, where it nucleates assembly of the 50S subunit. The protein is Large ribosomal subunit protein uL3 of Francisella tularensis subsp. tularensis (strain FSC 198).